Reading from the N-terminus, the 132-residue chain is Insulin-like 3 (132 aa).

The first 21 residues, 1–21, serve as a signal peptide directing secretion; sequence MDRRPLTWALVLLGPALAIAL. Gln-27 carries the pyrrolidone carboxylic acid modification. Disulfide bonds link Cys-34–Cys-117, Cys-46–Cys-130, and Cys-116–Cys-121. A propeptide spans 67–104 (c peptide like); that stretch reads LLRWLEGQHLLHGLMASGDPVLVLAPQPLPQASRHHHH.

Belongs to the insulin family. As to quaternary structure, heterodimer of a B chain and an A chain linked by two disulfide bonds. 20% of B chains include an extra N-terminal pentapeptide. Expressed exclusively in Leydig cells of the testis.

The protein localises to the secreted. In terms of biological role, seems to play a role in testicular function. May be a trophic hormone with a role in testicular descent in fetal life. Is a ligand for LGR8 receptor. The sequence is that of Insulin-like 3 (INSL3) from Bos taurus (Bovine).